The chain runs to 472 residues: 3-isopropylmalate dehydratase large subunit (472 aa).

Residues C353, C414, and C417 each contribute to the [4Fe-4S] cluster site.

Belongs to the aconitase/IPM isomerase family. LeuC type 1 subfamily. As to quaternary structure, heterodimer of LeuC and LeuD. The cofactor is [4Fe-4S] cluster.

It catalyses the reaction (2R,3S)-3-isopropylmalate = (2S)-2-isopropylmalate. It participates in amino-acid biosynthesis; L-leucine biosynthesis; L-leucine from 3-methyl-2-oxobutanoate: step 2/4. Functionally, catalyzes the isomerization between 2-isopropylmalate and 3-isopropylmalate, via the formation of 2-isopropylmaleate. The polypeptide is 3-isopropylmalate dehydratase large subunit (Acinetobacter baumannii (strain AB0057)).